The primary structure comprises 849 residues: Dopamine receptor 2 (849 aa).

Residues 1–39 (MEAGETWNVSLEWPPPSLDLSTITQTPSTIVGSGIPLNY) lie on the Extracellular side of the membrane. Asparagine 8 carries an N-linked (GlcNAc...) asparagine glycan. The helical transmembrane segment at 40 to 60 (AGLSLIVIPLITLLGNLLVII) threads the bilayer. The Cytoplasmic portion of the chain corresponds to 61–70 (SVLRYRALQS). Residues 71–91 (AINFLILGLAVADLLVAIIVM) traverse the membrane as a helical segment. Topologically, residues 92–112 (PYAVYVYVTNGDWYLGNLMCD) are extracellular. A disulfide bond links cysteine 111 and cysteine 190. A helical membrane pass occupies residues 113–133 (IYMASDVCCSTASILLLAVIS). At 134–155 (FDRYRAVSLPIQYSRQSQNVKR) the chain is on the cytoplasmic side. The helical transmembrane segment at 156-176 (VWTLIAVIWLVSLTLASPMVF) threads the bilayer. Residues 177–203 (GVNVRPPDANPYECRFYNAEFSILSSM) lie on the Extracellular side of the membrane. Residues 183 to 849 (PDANPYECRF…HHFSNKQAHV (667 aa)) are required for the interaction with gpa-14. Residues 204-224 (ISFVIPCFLVLFVYIRIIIAL) form a helical membrane-spanning segment. Over 225–759 (KKREKAAKMR…QRKEKRATKT (535 aa)) the chain is Cytoplasmic. The tract at residues 450-515 (RRSSYADDSQ…NNSRTASITN (66 aa)) is disordered. A compositionally biased stretch (low complexity) spans 457 to 470 (DSQPTSSQTSSGDG). A compositionally biased stretch (basic residues) spans 477–498 (GQKRFRNLSRNYSTKHHRKVVK). The segment covering 501–515 (RGNSRNNSRTASITN) has biased composition (polar residues). A helical membrane pass occupies residues 760–780 (LGVVVGVFLVCWVPFFVINIL). Topologically, residues 781-798 (NAVCILLNKDSCQVGYDL) are extracellular. Residues 799–819 (FFYCTWIGYMNSFMNPIIYTI) form a helical membrane-spanning segment. Topologically, residues 820–849 (FNTEFRRAFKSIIFGRNSTRHHFSNKQAHV) are cytoplasmic.

It belongs to the G-protein coupled receptor 1 family. In terms of assembly, interacts (via C-terminus) with the G-alpha protein gpa-14; the interaction is direct. As to expression, expressed in all dopaminergic neurons. Expressed in neurons around the nerve ring and the posterior side of the body including PDE neurons. In hermaphrodites, expressed in the head and tail ganglia including in the RIA interneuron pair, and in a subset of sublateral interneurons and the PDA neuron in the tail. Expressed in cholinergic SIA neurons. Also expressed in the male tail. In males, expressed in the dorsal spicule protractor, ventral spicule protractor, dorsal spicule retractor and ventral spicule retractor muscles and the sensory post-cloacal sensilla B (PCB) neuron. In males, expressed in the sensory hook neurons HOA.

Its subcellular location is the cell membrane. G-protein coupled receptor which binds to the neurotransmitter dopamine with high affinity leading to the activation of an associated G-protein and downstream signaling pathways. Couples to G-proteins to inhibit adenylate cyclase (AC) activity and cAMP production. Inhibits synaptic vesicle fusion to negatively regulate the release of dopamine at dopaminergic neuron synapses. Antagonizes octopamine signaling in response to food by promoting the dopamine-mediated suppression of crh-1/CREB1 transcription factor activation in cholinergic SIA neurons. This is most likely in association with the G(o)-alpha G-protein subunit goa-1. In association with the G-alpha protein gpa-14, modulates two types of learning behavior: touch habituation and chemosensory associative conditioning. May act partly via tsp-17 to negatively regulate dopamine reuptake transporter dat-1 activity. Plays a role in behavioral plasticity and regulates the decision-making process when conflicting alternatives are present. Promotes male mating behavior by antagonizing acetylcholine signaling to control the protrusions of copulatory spicules from the tail of males during hermaphrodite vulval location. Modulates unc-7 activity at gap junctions to promote inhibitory neuronal signaling transduction between chemosensory and mechanosensory neurons, and thus ensures spicule insertion attempts are confined to the hermaphrodite vulva during copulation. Functionally, G-protein coupled receptor which binds to the neurotransmitter dopamine with high affinity leading to the activation of an associated G-protein and downstream signaling pathways. Couples to G-proteins to inhibit adenylate cyclase (AC) activity and cAMP production. The polypeptide is Dopamine receptor 2 (Caenorhabditis elegans).